A 318-amino-acid chain; its full sequence is Ribonuclease Z (318 aa).

7 residues coordinate Zn(2+): H62, H64, D66, H67, H139, D210, and H268. The Proton acceptor role is filled by D66.

This sequence belongs to the RNase Z family. Homodimer. It depends on Zn(2+) as a cofactor.

It carries out the reaction Endonucleolytic cleavage of RNA, removing extra 3' nucleotides from tRNA precursor, generating 3' termini of tRNAs. A 3'-hydroxy group is left at the tRNA terminus and a 5'-phosphoryl group is left at the trailer molecule.. Zinc phosphodiesterase, which displays some tRNA 3'-processing endonuclease activity. Probably involved in tRNA maturation, by removing a 3'-trailer from precursor tRNA. In Gloeothece citriformis (strain PCC 7424) (Cyanothece sp. (strain PCC 7424)), this protein is Ribonuclease Z.